Here is an 89-residue protein sequence, read N- to C-terminus: MANIKASKKDALTSEKRRKKNSSRRSMIRTFVKKVRVAIMSGNKTTAEDAFKKMQPIIDSHVNKGLIHKNKAARYKSNLSLQIKKISKI.

Residues 1–26 (MANIKASKKDALTSEKRRKKNSSRRS) form a disordered region. A compositionally biased stretch (basic residues) spans 16-26 (KRRKKNSSRRS).

Belongs to the bacterial ribosomal protein bS20 family.

Its function is as follows. Binds directly to 16S ribosomal RNA. This chain is Small ribosomal subunit protein bS20, found in Buchnera aphidicola subsp. Acyrthosiphon pisum (strain 5A).